Here is a 711-residue protein sequence, read N- to C-terminus: Dixin (711 aa).

Leu-2 is lipidated: N-myristoyl glycine. Position 13 is a phosphoserine (Val-13). Positions 20 to 153 (EQQLQAYVAW…LVLALAAHFK (134 aa)) constitute a Calponin-homology (CH) domain. The interval 153–326 (KPGSSRTVSQ…LEKEMEEAKK (174 aa)) is actin-binding. Ser-212 carries the post-translational modification Phosphoserine. Disordered stretches follow at residues 233 to 258 (GQQK…AKSE), 271 to 298 (VIIP…PGSR), and 584 to 623 (TQKK…SSPA). Residues 237-254 (SPSESSCSSLTSPSPIHS) show a composition bias toward low complexity. A Phosphoserine modification is found at Ser-257. The segment covering 278–295 (IENRTDEPDSPSSRDWRP) has biased composition (basic and acidic residues). Positions 279 to 452 (ENRTDEPDSP…NRLLGEYKKE (174 aa)) form a coiled coil. The span at 597 to 623 (PRNQASSEYRASWPPNSTLPHSQSSPA) shows a compositional bias: polar residues. The DIX domain maps to 600-680 (QASSEYRASW…HFKALDPEFG (81 aa)). Ser-618 bears the Phosphoserine mark.

It belongs to the DIXDC1 family. In terms of assembly, may bind filamentous actin. Directly interacts (via DIX domain) with DVL2 (via DIX domain). Interacts with gamma-tubulin. Interacts with the complex composed of DVL2 and Rac. Interacts with AXIN1; competes with MAP3K1. Interacts with MAP3K4 preventing MAP3K4 interaction with AXIN1. Phosphorylated on tyrosine and serine residues. In terms of processing, polyubiquitinated, leading to its proteasomal degradation. WNT3A signaling increases DIXDC1 protein levels by inhibiting its ubiquitination and subsequent degradation. In terms of tissue distribution, abundantly expressed in brain and testis and to a lower extent in lung, kidney, colon, ovary and urinary bladder. Expressed in brain, liver, testis and spleen (at protein level). Expressed throughout the brain with strong expression in main and accessory olfactory bulbs, cerebral cortex, piriform cortex, hippocampus, habenular nucleus, dorsal thalamus, superior and inferior colliculi and cerebellum.

It is found in the cell junction. The protein resides in the focal adhesion. It localises to the cytoplasm. The protein localises to the cytoskeleton. Its subcellular location is the stress fiber. Functionally, positive effector of the Wnt signaling pathway; activates WNT3A signaling via DVL2. Regulates JNK activation by AXIN1 and DVL2. This is Dixin (Dixdc1) from Mus musculus (Mouse).